A 717-amino-acid polypeptide reads, in one-letter code: MFNKIVKEFQWGNHKVRMETGEIARQASGAVLLDMDDTVVLATVVGAKNAKPGQDFFPLTVDYIEKTYAAGKIPGGFFKREGRPSENETLTSRLIDRPLRPLFPEGFYNEVQVVIHVLSINPEVPADIPALVAASAALAVSGLPFNGPVGAARVGYKDGQYLLNPNRAQLAHSDLDLVVAGTERAVLMVESEANQLSEEVMLGAVVYGHEQMQIAINAIHDLVRDGGKPEWDWQAAPKNEALVAKVSELGLADLQAAYQLRQKSARSQKLKEVYASVAAKLAEAGVEADGVEVDNILFELESKIVRGQILNGEPRIDGRDTRTVRPIEIRSSVLPRAHGSALFTRGETQALVVATLGTKSDEQIIDALQGEYRDRFMLHYNMPPFATGETGRVGSPKRREIGHGRLAKRALIPVLPKEDEFAYTIRLVSEITESNGSSSMASVCGGCLALMDAGVPVKAHVAGVAMGLILEGNKFAVLTDILGDEDHLGDMDFKVAGTDNGITALQMDIKVQGITKEIMQVALAQAKEGRLHILGKMQAAMGHARTELSEHAPRMITVKINPEKIRDVIGKGGSTIQALTKETGCTIDIQEDGTITIASTSSEGMAEAKRRIEGITAEAEVGKIYSGTVLKLLDFGAIVNILPGKDGLLHISEIANERVNQVSDYVKEGQMVRVKLLSTDEKGRMRLSIKAAKAEEGDVPATAPQAPGAGDATSQQQ.

Mg(2+) contacts are provided by D486 and D492. The 60-residue stretch at P553–I612 folds into the KH domain. One can recognise an S1 motif domain in the interval G622–K690. The tract at residues K690–Q717 is disordered.

This sequence belongs to the polyribonucleotide nucleotidyltransferase family. Mg(2+) is required as a cofactor.

It localises to the cytoplasm. It carries out the reaction RNA(n+1) + phosphate = RNA(n) + a ribonucleoside 5'-diphosphate. Involved in mRNA degradation. Catalyzes the phosphorolysis of single-stranded polyribonucleotides processively in the 3'- to 5'-direction. The chain is Polyribonucleotide nucleotidyltransferase from Ralstonia nicotianae (strain ATCC BAA-1114 / GMI1000) (Ralstonia solanacearum).